The chain runs to 174 residues: NADH-quinone oxidoreductase subunit B 2 (174 aa).

The [4Fe-4S] cluster site is built by Cys51, Cys52, Cys116, and Cys145.

It belongs to the complex I 20 kDa subunit family. NDH-1 is composed of 14 different subunits. Subunits NuoB, C, D, E, F, and G constitute the peripheral sector of the complex. It depends on [4Fe-4S] cluster as a cofactor.

It localises to the cell inner membrane. The catalysed reaction is a quinone + NADH + 5 H(+)(in) = a quinol + NAD(+) + 4 H(+)(out). Functionally, NDH-1 shuttles electrons from NADH, via FMN and iron-sulfur (Fe-S) centers, to quinones in the respiratory chain. The immediate electron acceptor for the enzyme in this species is believed to be ubiquinone. Couples the redox reaction to proton translocation (for every two electrons transferred, four hydrogen ions are translocated across the cytoplasmic membrane), and thus conserves the redox energy in a proton gradient. The chain is NADH-quinone oxidoreductase subunit B 2 from Thermodesulfovibrio yellowstonii (strain ATCC 51303 / DSM 11347 / YP87).